A 469-amino-acid polypeptide reads, in one-letter code: Adenosylhomocysteinase (469 aa).

Substrate-binding residues include Thr63, Asp139, and Glu164. Thr165–Thr167 lines the NAD(+) pocket. Substrate contacts are provided by Lys194 and Asp198. NAD(+)-binding positions include Asn199, Gly228–Gly233, Glu251, Asn300, Ile321–His323, and Asn375.

The protein belongs to the adenosylhomocysteinase family. Requires NAD(+) as cofactor.

The protein resides in the cytoplasm. It catalyses the reaction S-adenosyl-L-homocysteine + H2O = L-homocysteine + adenosine. The protein operates within amino-acid biosynthesis; L-homocysteine biosynthesis; L-homocysteine from S-adenosyl-L-homocysteine: step 1/1. Functionally, may play a key role in the regulation of the intracellular concentration of adenosylhomocysteine. This chain is Adenosylhomocysteinase, found in Pseudomonas entomophila (strain L48).